Reading from the N-terminus, the 826-residue chain is E3 ubiquitin-protein ligase SH3RF1 (826 aa).

The RING-type zinc-finger motif lies at 12-53 (CPVCLERLDASAKVLPCQHTFCKRCLLGIVSSRKELRCPECR). A disordered region spans residues 80 to 130 (PRKAGDGGSAGNSTNALRAQGSVTTNGGLNDAQNTQSGQQRIQARSPPVRG). Over residues 90 to 122 (GNSTNALRAQGSVTTNGGLNDAQNTQSGQQRIQ) the composition is skewed to polar residues. SH3 domains follow at residues 132-191 (PQLP…IIKP) and 194-257 (QPPP…FNSA). A disordered region spans residues 266-319 (KPSGADTGEGSSGTSHSGNSQKQADAKKNTKKRHSFTSLTMSNKSSQSVQNRHS). The segment covering 273–285 (GEGSSGTSHSGNS) has biased composition (low complexity). Residues 301-317 (FTSLTMSNKSSQSVQNR) are compositionally biased toward polar residues. The SH3 3 domain maps to 398–459 (ARPSVFIAIY…PGNYVAPVTR (62 aa)). 2 disordered regions span residues 647 to 694 (NSAA…QTNS) and 725 to 759 (DSVSASTPAQDNRKPASLDNNIPIAPPPRQPCSSL). The segment covering 652 to 663 (KQDKDSKKEKKG) has biased composition (basic and acidic residues). An SH3 4 domain is found at 767 to 826 (RPCERYRVMVSYPPQSEAELELKEGDIVFVHKKREDGWFKGTLQRNGKTGLFPGSFVENI).

It belongs to the SH3RF family. Post-translationally, autoubiquitinated. Ubiquitinated by SH3RF2, leading to proteasome-mediated degradation.

The protein resides in the cytoplasm. It is found in the perinuclear region. Its subcellular location is the cell projection. It localises to the lamellipodium. The protein localises to the golgi apparatus. The protein resides in the trans-Golgi network. It catalyses the reaction S-ubiquitinyl-[E2 ubiquitin-conjugating enzyme]-L-cysteine + [acceptor protein]-L-lysine = [E2 ubiquitin-conjugating enzyme]-L-cysteine + N(6)-ubiquitinyl-[acceptor protein]-L-lysine.. Its pathway is protein modification; protein ubiquitination. Has E3 ubiquitin-protein ligase activity. In the absence of an external substrate, it can catalyze self-ubiquitination. Acts as a scaffold protein that contributes to the effective activation of the JNK signaling pathway. Plays an essential role in the anterior neural development. This is E3 ubiquitin-protein ligase SH3RF1 (sh3rf1) from Xenopus laevis (African clawed frog).